Here is a 248-residue protein sequence, read N- to C-terminus: NADP-dependent 3-hydroxy acid dehydrogenase YdfG (248 aa).

Residues 7-12, 32-33, 54-55, and Asn-81 contribute to the NADP(+) site; these read GATAGF, RR, and DV. Ser-134 contributes to the substrate binding site. NADP(+) contacts are provided by residues Tyr-147, Lys-151, and 177–185; that span reads PGLVGGTEF. Tyr-147 (proton acceptor) is an active-site residue.

This sequence belongs to the short-chain dehydrogenases/reductases (SDR) family. In terms of assembly, homotetramer.

It carries out the reaction 3-hydroxypropanoate + NADP(+) = 3-oxopropanoate + NADPH + H(+). The enzyme catalyses L-allo-threonine + NADP(+) = aminoacetone + CO2 + NADPH. Its function is as follows. NADP-dependent dehydrogenase with broad substrate specificity acting on 3-hydroxy acids. Catalyzes the NADP-dependent oxidation of L-allo-threonine to L-2-amino-3-keto-butyrate, which is spontaneously decarboxylated into aminoacetone. Also acts on D-threonine, L-serine, D-serine, D-3-hydroxyisobutyrate, L-3-hydroxyisobutyrate, D-glycerate and L-glycerate. Able to catalyze the reduction of the malonic semialdehyde to 3-hydroxypropionic acid. YdfG is apparently supplementing RutE, the presumed malonic semialdehyde reductase involved in pyrimidine degradation since both are able to detoxify malonic semialdehyde. The protein is NADP-dependent 3-hydroxy acid dehydrogenase YdfG of Shigella flexneri.